Consider the following 682-residue polypeptide: Potassium-transporting ATPase ATP-binding subunit (682 aa).

Transmembrane regions (helical) follow at residues 34–54 (PVMF…VAMA), 62–82 (AGFT…ANVA), 219–239 (IALT…TATL), and 254–274 (VLVA…LSAI). Asp307 functions as the 4-aspartylphosphate intermediate in the catalytic mechanism. Residues Asp344, Glu348, 377 to 384 (FTAQTRMS), and Lys395 each bind ATP. Residues Asp518 and Asp522 each contribute to the Mg(2+) site. The next 3 membrane-spanning stretches (helical) occupy residues 588 to 608 (FAII…LNVM), 616 to 636 (AILS…PLAL), and 662 to 682 (LVVP…FGLV).

The protein belongs to the cation transport ATPase (P-type) (TC 3.A.3) family. Type IA subfamily. In terms of assembly, the system is composed of three essential subunits: KdpA, KdpB and KdpC.

It localises to the cell inner membrane. The catalysed reaction is K(+)(out) + ATP + H2O = K(+)(in) + ADP + phosphate + H(+). Functionally, part of the high-affinity ATP-driven potassium transport (or Kdp) system, which catalyzes the hydrolysis of ATP coupled with the electrogenic transport of potassium into the cytoplasm. This subunit is responsible for energy coupling to the transport system and for the release of the potassium ions to the cytoplasm. The polypeptide is Potassium-transporting ATPase ATP-binding subunit (Enterobacter sp. (strain 638)).